The sequence spans 166 residues: 2-C-methyl-D-erythritol 2,4-cyclodiphosphate synthase (166 aa).

Residues Asp-15 and His-17 each coordinate a divalent metal cation. Residues 15-17 and 43-44 each bind 4-CDP-2-C-methyl-D-erythritol 2-phosphate; these read DVH and HS. Residue His-51 coordinates a divalent metal cation. 4-CDP-2-C-methyl-D-erythritol 2-phosphate is bound by residues 65-67, 141-144, and Arg-151; these read DIG and TTNE.

The protein belongs to the IspF family. In terms of assembly, homotrimer. A divalent metal cation serves as cofactor.

It catalyses the reaction 4-CDP-2-C-methyl-D-erythritol 2-phosphate = 2-C-methyl-D-erythritol 2,4-cyclic diphosphate + CMP. Its pathway is isoprenoid biosynthesis; isopentenyl diphosphate biosynthesis via DXP pathway; isopentenyl diphosphate from 1-deoxy-D-xylulose 5-phosphate: step 4/6. Involved in the biosynthesis of isopentenyl diphosphate (IPP) and dimethylallyl diphosphate (DMAPP), two major building blocks of isoprenoid compounds. Catalyzes the conversion of 4-diphosphocytidyl-2-C-methyl-D-erythritol 2-phosphate (CDP-ME2P) to 2-C-methyl-D-erythritol 2,4-cyclodiphosphate (ME-CPP) with a corresponding release of cytidine 5-monophosphate (CMP). In Synechococcus sp. (strain CC9311), this protein is 2-C-methyl-D-erythritol 2,4-cyclodiphosphate synthase.